We begin with the raw amino-acid sequence, 453 residues long: Bifunctional protein GlmU (453 aa).

Residues 1–225 (MNIVILAAGT…EWETLGVNSK (225 aa)) are pyrophosphorylase. UDP-N-acetyl-alpha-D-glucosamine-binding positions include 6–9 (LAAG), Lys-20, Gln-71, 76–77 (GT), 98–100 (YGD), Gly-135, Glu-150, Asn-165, and Asn-223. Asp-100 contacts Mg(2+). Residue Asn-223 coordinates Mg(2+). Residues 226–246 (AQLAELERIHQRTIADALLVD) form a linker region. The tract at residues 247–453 (GVTLADPARV…GYVRPVKKKS (207 aa)) is N-acetyltransferase. UDP-N-acetyl-alpha-D-glucosamine-binding residues include Arg-329 and Lys-347. His-359 acts as the Proton acceptor in catalysis. The UDP-N-acetyl-alpha-D-glucosamine site is built by Tyr-362 and Asn-373. Residues Ala-376, 382 to 383 (NY), Ser-401, and Ala-419 each bind acetyl-CoA.

In the N-terminal section; belongs to the N-acetylglucosamine-1-phosphate uridyltransferase family. It in the C-terminal section; belongs to the transferase hexapeptide repeat family. Homotrimer. It depends on Mg(2+) as a cofactor.

The protein resides in the cytoplasm. It catalyses the reaction alpha-D-glucosamine 1-phosphate + acetyl-CoA = N-acetyl-alpha-D-glucosamine 1-phosphate + CoA + H(+). The enzyme catalyses N-acetyl-alpha-D-glucosamine 1-phosphate + UTP + H(+) = UDP-N-acetyl-alpha-D-glucosamine + diphosphate. Its pathway is nucleotide-sugar biosynthesis; UDP-N-acetyl-alpha-D-glucosamine biosynthesis; N-acetyl-alpha-D-glucosamine 1-phosphate from alpha-D-glucosamine 6-phosphate (route II): step 2/2. It participates in nucleotide-sugar biosynthesis; UDP-N-acetyl-alpha-D-glucosamine biosynthesis; UDP-N-acetyl-alpha-D-glucosamine from N-acetyl-alpha-D-glucosamine 1-phosphate: step 1/1. It functions in the pathway bacterial outer membrane biogenesis; LPS lipid A biosynthesis. Its function is as follows. Catalyzes the last two sequential reactions in the de novo biosynthetic pathway for UDP-N-acetylglucosamine (UDP-GlcNAc). The C-terminal domain catalyzes the transfer of acetyl group from acetyl coenzyme A to glucosamine-1-phosphate (GlcN-1-P) to produce N-acetylglucosamine-1-phosphate (GlcNAc-1-P), which is converted into UDP-GlcNAc by the transfer of uridine 5-monophosphate (from uridine 5-triphosphate), a reaction catalyzed by the N-terminal domain. This chain is Bifunctional protein GlmU, found in Burkholderia ambifaria (strain MC40-6).